Consider the following 212-residue polypeptide: Pyridoxine/pyridoxamine 5'-phosphate oxidase (212 aa).

Substrate contacts are provided by residues 8-11 (RREY) and K66. FMN contacts are provided by residues 61-66 (RIVLLK), 76-77 (FT), R82, K83, and Q105. Positions 123, 127, and 131 each coordinate substrate. FMN contacts are provided by residues 140–141 (QS) and W185. Residue 191-193 (RLH) coordinates substrate. R195 provides a ligand contact to FMN.

This sequence belongs to the pyridoxamine 5'-phosphate oxidase family. As to quaternary structure, homodimer. FMN serves as cofactor.

The enzyme catalyses pyridoxamine 5'-phosphate + O2 + H2O = pyridoxal 5'-phosphate + H2O2 + NH4(+). It catalyses the reaction pyridoxine 5'-phosphate + O2 = pyridoxal 5'-phosphate + H2O2. Its pathway is cofactor metabolism; pyridoxal 5'-phosphate salvage; pyridoxal 5'-phosphate from pyridoxamine 5'-phosphate: step 1/1. It functions in the pathway cofactor metabolism; pyridoxal 5'-phosphate salvage; pyridoxal 5'-phosphate from pyridoxine 5'-phosphate: step 1/1. In terms of biological role, catalyzes the oxidation of either pyridoxine 5'-phosphate (PNP) or pyridoxamine 5'-phosphate (PMP) into pyridoxal 5'-phosphate (PLP). The polypeptide is Pyridoxine/pyridoxamine 5'-phosphate oxidase (Shewanella amazonensis (strain ATCC BAA-1098 / SB2B)).